The primary structure comprises 361 residues: Aromatic amino acid aminotransferase (361 aa).

Position 221 is an N6-(pyridoxal phosphate)lysine (Lys-221).

Belongs to the class-II pyridoxal-phosphate-dependent aminotransferase family. As to quaternary structure, homodimer. The cofactor is pyridoxal 5'-phosphate.

The catalysed reaction is an aromatic L-alpha-amino acid + 2-oxoglutarate = an aromatic oxo-acid + L-glutamate. In terms of biological role, aminotransferase that catalyzes the conversion of aromatic amino acids and 2-oxoglutarate into corresponding aromatic oxo acids and L-glutamate. The polypeptide is Aromatic amino acid aminotransferase (Mycobacterium marinum (strain ATCC BAA-535 / M)).